The sequence spans 511 residues: Glucose-6-phosphate 1-dehydrogenase (511 aa).

NADP(+) is bound by residues 29 to 36, R63, and K164; that span reads GASGDLAK. D-glucose 6-phosphate contacts are provided by residues K164, 194 to 198, E232, and D251; that span reads HYLGK. Residue H256 is the Proton acceptor of the active site. Position 347 (K347) interacts with NADP(+). K350 is a binding site for D-glucose 6-phosphate. NADP(+) is bound by residues K356, R360, and R382. D-glucose 6-phosphate is bound at residue Q384. Residues 390-392, 410-412, and R477 each bind NADP(+); these read YIK and DLT.

Belongs to the glucose-6-phosphate dehydrogenase family.

It carries out the reaction D-glucose 6-phosphate + NADP(+) = 6-phospho-D-glucono-1,5-lactone + NADPH + H(+). It functions in the pathway carbohydrate degradation; pentose phosphate pathway; D-ribulose 5-phosphate from D-glucose 6-phosphate (oxidative stage): step 1/3. Functionally, catalyzes the rate-limiting step of the oxidative pentose-phosphate pathway, which represents a route for the dissimilation of carbohydrates besides glycolysis. The main function of this enzyme is to provide reducing power (NADPH) and pentose phosphates for fatty acid and nucleic acid synthesis. The polypeptide is Glucose-6-phosphate 1-dehydrogenase (gsdA) (Emericella nidulans (strain FGSC A4 / ATCC 38163 / CBS 112.46 / NRRL 194 / M139) (Aspergillus nidulans)).